The sequence spans 422 residues: Proline--tRNA ligase (422 aa).

The protein belongs to the class-II aminoacyl-tRNA synthetase family. ProS type 2 subfamily. As to quaternary structure, homodimer.

It localises to the cytoplasm. The catalysed reaction is tRNA(Pro) + L-proline + ATP = L-prolyl-tRNA(Pro) + AMP + diphosphate. Its function is as follows. Catalyzes the attachment of proline to tRNA(Pro) in a two-step reaction: proline is first activated by ATP to form Pro-AMP and then transferred to the acceptor end of tRNA(Pro). This Wolbachia sp. subsp. Drosophila simulans (strain wRi) protein is Proline--tRNA ligase.